A 155-amino-acid polypeptide reads, in one-letter code: 3-hydroxyacyl-[acyl-carrier-protein] dehydratase FabZ (155 aa).

His54 is an active-site residue.

The protein belongs to the thioester dehydratase family. FabZ subfamily.

The protein localises to the cytoplasm. It catalyses the reaction a (3R)-hydroxyacyl-[ACP] = a (2E)-enoyl-[ACP] + H2O. Its function is as follows. Involved in unsaturated fatty acids biosynthesis. Catalyzes the dehydration of short chain beta-hydroxyacyl-ACPs and long chain saturated and unsaturated beta-hydroxyacyl-ACPs. This chain is 3-hydroxyacyl-[acyl-carrier-protein] dehydratase FabZ, found in Burkholderia ambifaria (strain MC40-6).